The chain runs to 101 residues: Replication restart protein PriB (101 aa).

An SSB domain is found at 1 to 101; that stretch reads MTTNNLVLAG…LHAENVELKT (101 aa).

This sequence belongs to the PriB family. In terms of assembly, homodimer. Interacts with PriA and DnaT. Component of the replication restart primosome. Primosome assembly occurs via a 'hand-off' mechanism. PriA binds to replication forks, subsequently PriB then DnaT bind; DnaT then displaces ssDNA to generate the helicase loading substrate.

Involved in the restart of stalled replication forks, which reloads the replicative helicase on sites other than the origin of replication; the PriA-PriB pathway is the major replication restart pathway. During primosome assembly it facilitates complex formation between PriA and DnaT on DNA; stabilizes PriA on DNA. Stimulates the DNA unwinding activity of PriA helicase. The chain is Replication restart protein PriB from Shewanella halifaxensis (strain HAW-EB4).